Here is a 728-residue protein sequence, read N- to C-terminus: Probable LRR receptor-like serine/threonine-protein kinase At1g14390 (728 aa).

A signal peptide spans 1–27 (MHSSSKSQAFSLTFLLFLFLLPSVSES). The Extracellular segment spans residues 28-356 (QLISSESRTL…EEDTGIELGL (329 aa)). N-linked (GlcNAc...) asparagine glycans are attached at residues N55 and N85. LRR repeat units follow at residues 74-96 (NGHV…RFSS), 106-130 (LSNL…IIRL), 131-155 (SSSL…ISSL), 157-178 (NLRS…LRGL), 179-202 (SNLQ…LASN), 204-224 (ITIS…IKKL), 225-248 (NKLQ…LLSL), 249-272 (PSLQ…SLCN), and 274-295 (KLRI…CFSS). 2 N-linked (GlcNAc...) asparagine glycosylation sites follow: N138 and N169. N210 carries an N-linked (GlcNAc...) asparagine glycan. N253 and N267 each carry an N-linked (GlcNAc...) asparagine glycan. A helical membrane pass occupies residues 357-377 (VIGIIIGVILVSAVLAGLVLV). Over 378–728 (RMRKSRSKEE…ENLGLGGSEL (351 aa)) the chain is Cytoplasmic. The Protein kinase domain maps to 421–709 (TMRSAVIGLS…DVVWNLQYTI (289 aa)).

This sequence belongs to the protein kinase superfamily. Ser/Thr protein kinase family.

Its subcellular location is the membrane. The enzyme catalyses L-seryl-[protein] + ATP = O-phospho-L-seryl-[protein] + ADP + H(+). It catalyses the reaction L-threonyl-[protein] + ATP = O-phospho-L-threonyl-[protein] + ADP + H(+). The chain is Probable LRR receptor-like serine/threonine-protein kinase At1g14390 from Arabidopsis thaliana (Mouse-ear cress).